The sequence spans 482 residues: MVTTNVVTGKVVVVSGPAVDCEFPEGQIPPVHTAIRIISEGFDIPTPIDIICEVQQHIGEGRVRTIALQPTEGLVRGMQAISLGHPVEVPVGPETLGRVLNVIGEPVDEMGPVNAKKHYPIHRPAPSFEDQSTRLEMFETGIKVIDLIEPYLRGGKIGLFGGAGVGKTVIIQELINNLAMKHGGVSVFAGVGERTREGNDLWLEFQESGVIDPHDYTKSKCALIYGQMTEPPGARLRVGLTGLTVAEYFRDEEHQDVLLFIDNIFRFTQAGSEVSALLGRMPSAVGYQPNLATEMGELQERITSTKNGSITSVQAIYVPADDYTDPAPATAFAHLDATTNLSRDIAALGIYPAVDPLASTSRILDPHIVGEDHYATAQMVKGTLQRYKDLQDIIAILGIDELSDEDKLTVARARKVQKFLSQPFHVAEQFTGFKGKYVKLADSIKGFREIVEGKHDGVPEQAFYMQGTIEDVLEKAEAMKKA.

161–168 (GGAGVGKT) contacts ATP.

It belongs to the ATPase alpha/beta chains family. As to quaternary structure, F-type ATPases have 2 components, CF(1) - the catalytic core - and CF(0) - the membrane proton channel. CF(1) has five subunits: alpha(3), beta(3), gamma(1), delta(1), epsilon(1). CF(0) has three main subunits: a(1), b(2) and c(9-12). The alpha and beta chains form an alternating ring which encloses part of the gamma chain. CF(1) is attached to CF(0) by a central stalk formed by the gamma and epsilon chains, while a peripheral stalk is formed by the delta and b chains.

Its subcellular location is the cell inner membrane. It catalyses the reaction ATP + H2O + 4 H(+)(in) = ADP + phosphate + 5 H(+)(out). Its function is as follows. Produces ATP from ADP in the presence of a proton gradient across the membrane. The catalytic sites are hosted primarily by the beta subunits. In Solibacter usitatus (strain Ellin6076), this protein is ATP synthase subunit beta.